A 53-amino-acid polypeptide reads, in one-letter code: U13-myrmicitoxin-Tb1a (53 aa).

The signal sequence occupies residues 1–23 (MKLIYIFSLVAVIAVTMIPGIMG). The propeptide occupies 24–29 (EAEAEG). K52 is subject to Lysine amide.

As to expression, expressed by the venom gland.

The protein resides in the secreted. In vivo, this neurotoxin paralyzes about 70% of blowflies (L.caesar) one hour after intrathoracic injection, when tested at high doses (45 nmol/g). In Tetramorium bicarinatum (Tramp ant), this protein is U13-myrmicitoxin-Tb1a.